Consider the following 390-residue polypeptide: Enoyl-[acyl-carrier-protein] reductase [NADH], chloroplastic (390 aa).

The transit peptide at methionine 1 to arginine 74 directs the protein to the chloroplast. Residues leucine 53 and asparagine 170 each contribute to the NADP(+) site. Serine 239 acts as the Proton donor in catalysis. Positions 282 and 314 each coordinate NADP(+). Lysine 282 serves as the catalytic Lowers pKa of active site Tyr.

This sequence belongs to the short-chain dehydrogenases/reductases (SDR) family. FabI subfamily. In terms of assembly, homotetramer. In terms of tissue distribution, expressed in flowers and siliques and at lower levels in roots and leaves (at protein level).

Its subcellular location is the plastid. It localises to the chloroplast. The enzyme catalyses a 2,3-saturated acyl-[ACP] + NAD(+) = a (2E)-enoyl-[ACP] + NADH + H(+). Its pathway is lipid metabolism; fatty acid biosynthesis. Inhibited by the phytotoxin cyperin and the synthetic antimicrobial compound triclosan. Catalyzes the NAD-dependent reduction of a carbon-carbon double bond in an enoyl moiety that is covalently linked to an acyl carrier protein (ACP). Catalyzes the last reduction step in the de novo synthesis cycle of fatty acids. Involved in the elongation cycle of fatty acids which are used in lipid metabolism. Required for normal plant growth. This is Enoyl-[acyl-carrier-protein] reductase [NADH], chloroplastic (MOD1) from Arabidopsis thaliana (Mouse-ear cress).